We begin with the raw amino-acid sequence, 441 residues long: ATP-dependent protease ATPase subunit HslU (441 aa).

ATP is bound by residues Ile18 and 60–65 (GVGKTE). The segment at 131-158 (ILDALLPRPRGSEYDHARDESSTRQTFR) is disordered. Residues 140–152 (RGSEYDHARDESS) are compositionally biased toward basic and acidic residues. The ATP site is built by Asp254, Glu320, and Arg392.

Belongs to the ClpX chaperone family. HslU subfamily. A double ring-shaped homohexamer of HslV is capped on each side by a ring-shaped HslU homohexamer. The assembly of the HslU/HslV complex is dependent on binding of ATP.

Its subcellular location is the cytoplasm. In terms of biological role, ATPase subunit of a proteasome-like degradation complex; this subunit has chaperone activity. The binding of ATP and its subsequent hydrolysis by HslU are essential for unfolding of protein substrates subsequently hydrolyzed by HslV. HslU recognizes the N-terminal part of its protein substrates and unfolds these before they are guided to HslV for hydrolysis. In Chromohalobacter salexigens (strain ATCC BAA-138 / DSM 3043 / CIP 106854 / NCIMB 13768 / 1H11), this protein is ATP-dependent protease ATPase subunit HslU.